Reading from the N-terminus, the 593-residue chain is MKRFIPHRVIHAVCIGLALVGCRKLDSRAGDFELTIIHINDHHSHLEPEPLELAVAGERLRAAVGGYAALVHEIQRLRAESKNALVLHAGDALIGTLYSTLFRGRADAVLMNHAGFDFFTLGNHEFDNGNEGLKEFLHYLEVPVLSANVVPNAASTLHGLWKPSAIVERAGERIGVIGLDTVKKTVESSSPGKDINFIDEIEAVRRATVEMQQQGVNKIILLSHAGFEKNCEIAQNISGIDVIVSGDTHYLLGDESLGRLGLPVVGEYPRKIMSPAGEPVYVVEAWEYGKCLGELNVVFDRTGVITSAVGMPRFLLHTNTLQKKGADRKNYPLEEAEREALLVALRMTPEIIFAQENDQIISVLEEFKKEKEALGAQAIGVITGASMRGGSVHRVPDAQNPQGSVATRFVAETMLSDIQSFGAGKVDCVIQNAGGARSNIQPGEITYNDAYTLLPFSNTLVLVDVSGAELKQIIEDALQFALGDGSTGAFPYGAGVRYEARQEPDEHGKRVIKLEVQKKDGAWVPVDERAPYRLGVNSYIARGKDGYKTLGEIVSTRGAEDTYLRDAESLIKFLRAHKNFRAYTDSNVIFRLK.

A signal peptide spans 1-21 (MKRFIPHRVIHAVCIGLALVG). Cys-22 carries the N-palmitoyl cysteine lipid modification. A lipid anchor (S-diacylglycerol cysteine) is attached at Cys-22. Residues Asp-41, His-43, Asp-91, Asn-123, and His-224 each contribute to the a divalent metal cation site. Residues Phe-456 and 539–545 (YIARGKD) contribute to the substrate site.

This sequence belongs to the 5'-nucleotidase family. The cofactor is a divalent metal cation.

Its subcellular location is the cell membrane. It carries out the reaction a ribonucleoside 5'-phosphate + H2O = a ribonucleoside + phosphate. This chain is Probable 5'-nucleotidase, found in Treponema pallidum (strain Nichols).